A 30-amino-acid polypeptide reads, in one-letter code: Basic phospholipase A2 CM-I (30 aa).

The protein belongs to the phospholipase A2 family. Group I subfamily. The cofactor is Ca(2+). In terms of tissue distribution, expressed by the venom gland.

The protein localises to the secreted. It carries out the reaction a 1,2-diacyl-sn-glycero-3-phosphocholine + H2O = a 1-acyl-sn-glycero-3-phosphocholine + a fatty acid + H(+). Functionally, snake venom phospholipase A2 (PLA2) that shows weak anticoagulant activity. Is more catalytically active than the strong anticoagulant protein CM-IV found in this venom. Acts by inhibiting the complex composed of tissue factor (F3) and coagulation factor VIIa (F7) (TF-VIIa complex) by only enzymatic mechanism. PLA2 catalyzes the calcium-dependent hydrolysis of the 2-acyl groups in 3-sn-phosphoglycerides. This chain is Basic phospholipase A2 CM-I, found in Naja nigricollis (Black-necked spitting cobra).